Consider the following 97-residue polypeptide: Large ribosomal subunit protein eL21 (97 aa).

Belongs to the eukaryotic ribosomal protein eL21 family.

This chain is Large ribosomal subunit protein eL21, found in Methanosarcina barkeri (strain Fusaro / DSM 804).